Here is an 805-residue protein sequence, read N- to C-terminus: Na(+)/H(+) antiporter subunit A1 (805 aa).

20 consecutive transmembrane segments (helical) span residues 1-21, 30-50, 79-99, 117-137, 166-186, 201-221, 226-246, 265-285, 300-320, 337-357, 377-397, 427-447, 480-500, 531-551, 591-611, 623-643, 646-666, 671-691, 707-727, and 766-786; these read MSLL…IPFV, LGWF…SYIS, LGLL…LYSI, LFMG…LYLF, MLVT…LSIA, EIQT…GAMT, FPFY…SAYL, IFAV…ITLF, ILAF…GVGA, FTAA…LFMI, LTIM…MAGI, LGIL…VYSI, ILAI…GSII, LGIY…IYLL, LVII…VTPF, PFEL…IFAK, LFSI…FIFF, LALT…LCFY, LVNI…GLIA, and TLFE…MIKL.

This sequence belongs to the CPA3 antiporters (TC 2.A.63) subunit A family. In terms of assembly, may form a heterooligomeric complex that consists of seven subunits: mnhA1, mnhB1, mnhC1, mnhD1, mnhE1, mnhF1 and mnhG1.

The protein resides in the cell membrane. In terms of biological role, mnh complex is a Na(+)/H(+) antiporter involved in Na(+) excretion. This Staphylococcus saprophyticus subsp. saprophyticus (strain ATCC 15305 / DSM 20229 / NCIMB 8711 / NCTC 7292 / S-41) protein is Na(+)/H(+) antiporter subunit A1 (mnhA1).